We begin with the raw amino-acid sequence, 26 residues long: Oxyopinin-3b (26 aa).

In terms of tissue distribution, expressed by the venom gland.

It is found in the secreted. In terms of biological role, may have cytolytic and antimicrobial activity. The polypeptide is Oxyopinin-3b (Oxyopes takobius (Lynx spider)).